Consider the following 428-residue polypeptide: Stromal membrane-associated protein 2 (428 aa).

Residues 13–139 (QAVLANLLLE…INVLRKEKDD (127 aa)) form the Arf-GAP domain. The C4-type zinc-finger motif lies at 28–51 (CADCQSKGPRWASWNIGVFICIRC). Phosphoserine occurs at positions 127, 219, 224, 230, and 239. The segment at 163–231 (MPQKKEDAQL…SVSRKAVGSM (69 aa)) is interaction with clathrin heavy chains. The tract at residues 218 to 262 (PSPSSVSRKAVGSMPTAGSAGSVPENLNLFPEPGSKSEETGKKQL) is disordered. The segment covering 252–262 (SKSEETGKKQL) has biased composition (basic and acidic residues). The interaction with PICALM stretch occupies residues 339-428 (MGGMQASMMG…NQTLSPQMWK (90 aa)).

In terms of assembly, interacts with ARF1. Interacts with PICALM and clathrin heavy chains.

It is found in the cytoplasm. Functionally, GTPase activating protein that acts on ARF1. Can also activate ARF6 (in vitro). May play a role in clathrin-dependent retrograde transport from early endosomes to the trans-Golgi network. The sequence is that of Stromal membrane-associated protein 2 (Smap2) from Mus musculus (Mouse).